Consider the following 93-residue polypeptide: Large ribosomal subunit protein uL23 (93 aa).

Belongs to the universal ribosomal protein uL23 family. In terms of assembly, part of the 50S ribosomal subunit. Contacts protein L29, and trigger factor when it is bound to the ribosome.

One of the early assembly proteins it binds 23S rRNA. One of the proteins that surrounds the polypeptide exit tunnel on the outside of the ribosome. Forms the main docking site for trigger factor binding to the ribosome. The polypeptide is Large ribosomal subunit protein uL23 (Sulfurovum sp. (strain NBC37-1)).